The following is a 211-amino-acid chain: Histidine biosynthesis bifunctional protein HisIE (211 aa).

The tract at residues 1–122 (MSFKAAEVSS…DAQEESQMVW (122 aa)) is phosphoribosyl-AMP cyclohydrolase. Positions 123 to 211 (LHQLEQLLAA…VVNKLKERHK (89 aa)) are phosphoribosyl-ATP pyrophosphohydrolase.

The protein in the N-terminal section; belongs to the PRA-CH family. In the C-terminal section; belongs to the PRA-PH family.

It localises to the cytoplasm. It catalyses the reaction 1-(5-phospho-beta-D-ribosyl)-ATP + H2O = 1-(5-phospho-beta-D-ribosyl)-5'-AMP + diphosphate + H(+). The enzyme catalyses 1-(5-phospho-beta-D-ribosyl)-5'-AMP + H2O = 1-(5-phospho-beta-D-ribosyl)-5-[(5-phospho-beta-D-ribosylamino)methylideneamino]imidazole-4-carboxamide. It participates in amino-acid biosynthesis; L-histidine biosynthesis; L-histidine from 5-phospho-alpha-D-ribose 1-diphosphate: step 2/9. Its pathway is amino-acid biosynthesis; L-histidine biosynthesis; L-histidine from 5-phospho-alpha-D-ribose 1-diphosphate: step 3/9. The polypeptide is Histidine biosynthesis bifunctional protein HisIE (Vibrio parahaemolyticus serotype O3:K6 (strain RIMD 2210633)).